A 447-amino-acid polypeptide reads, in one-letter code: Na(+)/H(+) antiporter NhaA 2 (447 aa).

The next 11 membrane-spanning stretches (helical) occupy residues 30 to 50 (FIHI…LAVL), 81 to 101 (LHKW…ALEL), 117 to 137 (LLSI…YLLL), 146 to 166 (GWGT…ALLG), 175 to 195 (IFML…VAIG), 199 to 219 (AVDW…RAMA), 220 to 240 (FLGV…WLVI), 315 to 335 (LLHP…NAGV), 350 to 370 (VFVG…WIAV), 383 to 403 (WGMV…ALFI), and 415 to 435 (AAKL…FLCL).

It belongs to the NhaA Na(+)/H(+) (TC 2.A.33) antiporter family.

It is found in the cell inner membrane. The catalysed reaction is Na(+)(in) + 2 H(+)(out) = Na(+)(out) + 2 H(+)(in). Functionally, na(+)/H(+) antiporter that extrudes sodium in exchange for external protons. This is Na(+)/H(+) antiporter NhaA 2 from Vibrio vulnificus (strain CMCP6).